Consider the following 219-residue polypeptide: Dephospho-CoA kinase (219 aa).

Positions 8-215 (LVGVTGGIGS…EAAASGPDCQ (208 aa)) constitute a DPCK domain. An ATP-binding site is contributed by 16–21 (GSGKST).

The protein belongs to the CoaE family.

The protein resides in the cytoplasm. It carries out the reaction 3'-dephospho-CoA + ATP = ADP + CoA + H(+). It functions in the pathway cofactor biosynthesis; coenzyme A biosynthesis; CoA from (R)-pantothenate: step 5/5. Functionally, catalyzes the phosphorylation of the 3'-hydroxyl group of dephosphocoenzyme A to form coenzyme A. The sequence is that of Dephospho-CoA kinase from Chlorobium luteolum (strain DSM 273 / BCRC 81028 / 2530) (Pelodictyon luteolum).